A 143-amino-acid chain; its full sequence is Large ribosomal subunit protein uL11 (143 aa).

Belongs to the universal ribosomal protein uL11 family. Part of the ribosomal stalk of the 50S ribosomal subunit. Interacts with L10 and the large rRNA to form the base of the stalk. L10 forms an elongated spine to which L12 dimers bind in a sequential fashion forming a multimeric L10(L12)X complex. One or more lysine residues are methylated.

Forms part of the ribosomal stalk which helps the ribosome interact with GTP-bound translation factors. The chain is Large ribosomal subunit protein uL11 from Bifidobacterium longum (strain DJO10A).